A 409-amino-acid polypeptide reads, in one-letter code: Arginine deiminase (409 aa).

Cys399 (amidino-cysteine intermediate) is an active-site residue.

Belongs to the arginine deiminase family.

It localises to the cytoplasm. It carries out the reaction L-arginine + H2O = L-citrulline + NH4(+). It participates in amino-acid degradation; L-arginine degradation via ADI pathway; carbamoyl phosphate from L-arginine: step 1/2. In Latilactobacillus sakei (Lactobacillus sakei), this protein is Arginine deiminase (arcA).